An 872-amino-acid chain; its full sequence is Leucine--tRNA ligase (872 aa).

Residues 42-52 (PYPSGSLHMGH) carry the 'HIGH' region motif. The short motif at 634–638 (TMSKS) is the 'KMSKS' region element. Residue Lys637 coordinates ATP.

It belongs to the class-I aminoacyl-tRNA synthetase family.

It localises to the cytoplasm. It carries out the reaction tRNA(Leu) + L-leucine + ATP = L-leucyl-tRNA(Leu) + AMP + diphosphate. This Trichormus variabilis (strain ATCC 29413 / PCC 7937) (Anabaena variabilis) protein is Leucine--tRNA ligase.